A 298-amino-acid chain; its full sequence is MKPNMACLKQVSALLLPLLFISFFKPSHAGGISVYWGQNGNEGSLADACNTGNYKYVNIAFLFTFGGGQTPQLNLAGHCNPSINNCNVFSDQIKECQSKDIKVLLSLGGASGSYSLTSADDATQVANYIWNNFLGGQSSSRPLGDAILDGVDFDIESGTGEHWDDLARALKGFNSQLLLTAAPQCPIPDAHLDTAIKTGLFDIVWVQFYNNPPCQYSSGNTNDLISSWNQWTSSQAKQLFLGVPASTAAAGSGFIPADVLTSQVLPTIKGSSKYGGVMLWDRFNDGQSGYSGAIIGSV.

The first 29 residues, 1–29 (MKPNMACLKQVSALLLPLLFISFFKPSHA), serve as a signal peptide directing secretion. The GH18 domain occupies 30–298 (GGISVYWGQN…GYSGAIIGSV (269 aa)). 2 disulfide bridges follow: Cys49–Cys96 and Cys79–Cys86. Glu156 serves as the catalytic Proton donor. An intrachain disulfide couples Cys185 to Cys214.

This sequence belongs to the glycosyl hydrolase 18 family. Chitinase class II subfamily.

Its subcellular location is the secreted. It is found in the extracellular space. It carries out the reaction Random endo-hydrolysis of N-acetyl-beta-D-glucosaminide (1-&gt;4)-beta-linkages in chitin and chitodextrins.. Functionally, this protein functions as a defense against chitin containing fungal pathogens. The chain is Acidic endochitinase from Phaseolus angularis (Azuki bean).